The following is a 701-amino-acid chain: Elongation factor G 1 (701 aa).

Positions 5–281 constitute a tr-type G domain; that stretch reads SKYRNIGIFA…AVVDYLPSPT (277 aa). GTP contacts are provided by residues 14 to 21, 78 to 82, and 132 to 135; these read AHVDAGKT, DTPGH, and NKLD.

Belongs to the TRAFAC class translation factor GTPase superfamily. Classic translation factor GTPase family. EF-G/EF-2 subfamily.

Its subcellular location is the cytoplasm. Catalyzes the GTP-dependent ribosomal translocation step during translation elongation. During this step, the ribosome changes from the pre-translocational (PRE) to the post-translocational (POST) state as the newly formed A-site-bound peptidyl-tRNA and P-site-bound deacylated tRNA move to the P and E sites, respectively. Catalyzes the coordinated movement of the two tRNA molecules, the mRNA and conformational changes in the ribosome. This chain is Elongation factor G 1, found in Colwellia psychrerythraea (strain 34H / ATCC BAA-681) (Vibrio psychroerythus).